The primary structure comprises 282 residues: DegV domain-containing protein spr1415 (282 aa).

Residues 3–280 enclose the DegV domain; the sequence is LAVFTDSSAY…AGSIALGYIP (278 aa). Hexadecanoate contacts are provided by T61 and S94.

In terms of biological role, may bind long-chain fatty acids, such as palmitate, and may play a role in lipid transport or fatty acid metabolism. The protein is DegV domain-containing protein spr1415 of Streptococcus pneumoniae (strain ATCC BAA-255 / R6).